The sequence spans 297 residues: Mitochondrial nicotinamide adenine dinucleotide transporter SLC25A51 (297 aa).

Positions 1 to 11 (MMDSEAHEKRP) are enriched in basic and acidic residues. Positions 1-20 (MMDSEAHEKRPPILTSSKQD) are disordered. Solcar repeat units follow at residues 28–108 (VGEM…LSCL), 116–200 (PEFA…IKEH), and 213–296 (NDFI…LLKV). A run of 6 helical transmembrane segments spans residues 36-56 (CGCCAAFNNVAITFPIQKVLF), 85-105 (LPPLMQKTTTLALMFGLYEDL), 116-135 (PEFATSGVAAVLAGTTEAIF), 179-199 (ILFRNGLSNVLFFGLRGPIKE), 215-235 (FICGGLLGAMLGFLFFPINVV), and 268-289 (LFRGAHLNYHRSLISWGIINAT).

Belongs to the mitochondrial carrier (TC 2.A.29) family.

It is found in the mitochondrion inner membrane. The enzyme catalyses NAD(+)(in) = NAD(+)(out). In terms of biological role, mitochondrial membrane carrier protein that mediates the import of NAD(+) into mitochondria. Mitochondrial NAD(+) is required for glycolysis and mitochondrial respiration. Compared to SLC25A52, SLC25A51-mediated transport is essential for the import of NAD(+) in mitochondria. The transport mechanism, uniport or antiport, its electrogenicity and substrate selectivity, remain to be elucidated. The chain is Mitochondrial nicotinamide adenine dinucleotide transporter SLC25A51 from Homo sapiens (Human).